The following is a 182-amino-acid chain: Ribulose bisphosphate carboxylase small subunit, chloroplastic (182 aa).

A chloroplast-targeting transit peptide spans 1 to 58 (MASSMLSTATVASINRVSPAQATMVAPFTGLKSTPVFPTTRKTNSDITSITSNGGKVQ).

Belongs to the RuBisCO small chain family. In terms of assembly, heterohexadecamer of 8 large and 8 small subunits.

The protein resides in the plastid. Its subcellular location is the chloroplast. RuBisCO catalyzes two reactions: the carboxylation of D-ribulose 1,5-bisphosphate, the primary event in carbon dioxide fixation, as well as the oxidative fragmentation of the pentose substrate. Both reactions occur simultaneously and in competition at the same active site. Although the small subunit is not catalytic it is essential for maximal activity. The protein is Ribulose bisphosphate carboxylase small subunit, chloroplastic of Manihot esculenta (Cassava).